Reading from the N-terminus, the 392-residue chain is S-adenosylmethionine synthase (392 aa).

ATP is bound at residue His-17. Asp-19 contacts Mg(2+). Glu-45 is a binding site for K(+). 2 residues coordinate L-methionine: Glu-58 and Gln-102. Residues 102 to 112 form a flexible loop region; sequence QSADIAQGVDA. Residues 169-171, 235-236, Asp-244, 250-251, Ala-267, and Lys-271 each bind ATP; these read DAK, KF, and RK. Residue Asp-244 coordinates L-methionine. Position 275 (Lys-275) interacts with L-methionine.

This sequence belongs to the AdoMet synthase family. As to quaternary structure, homotetramer; dimer of dimers. Mg(2+) serves as cofactor. K(+) is required as a cofactor.

The protein resides in the cytoplasm. It carries out the reaction L-methionine + ATP + H2O = S-adenosyl-L-methionine + phosphate + diphosphate. It functions in the pathway amino-acid biosynthesis; S-adenosyl-L-methionine biosynthesis; S-adenosyl-L-methionine from L-methionine: step 1/1. In terms of biological role, catalyzes the formation of S-adenosylmethionine (AdoMet) from methionine and ATP. The overall synthetic reaction is composed of two sequential steps, AdoMet formation and the subsequent tripolyphosphate hydrolysis which occurs prior to release of AdoMet from the enzyme. The chain is S-adenosylmethionine synthase from Methylobacterium radiotolerans (strain ATCC 27329 / DSM 1819 / JCM 2831 / NBRC 15690 / NCIMB 10815 / 0-1).